A 684-amino-acid polypeptide reads, in one-letter code: G-protein-signaling modulator 2 (684 aa).

Residues 22–357 are important for interaction with NUMA1; INSC and FRMPD1; that stretch reads ASCLELALEG…HLEISREVGD (336 aa). TPR repeat units lie at residues 24–57, 62–95, 102–135, 142–184, 202–235, 242–275, 282–315, and 322–355; these read CLEL…GTED, SAIY…ARTI, AKAS…SREL, ARAL…AVDF, GRAF…AKEF, RRAY…ARQL, AQSC…AQEL, and GRAC…SREV. S132 is modified (phosphoserine; by PKG). Residue S352 is modified to Phosphoserine; by PKG. Residues S408 and S483 each carry the phosphoserine modification. Residue T486 is modified to Phosphothreonine. One can recognise a GoLoco 1 domain in the interval 489 to 511; that stretch reads DEGFFDLLSRFQSNRMDDQRCCL. Phosphoserine; by PKC is present on S501. 2 positions are modified to phosphoserine: S541 and S565. GoLoco domains follow at residues 544–566, 594–616, and 628–650; these read TDEF…RASF, DEDF…RCAP, and DEDF…RVLL. A Phosphoserine; by PKG modification is found at S607. GDP contacts are provided by R608, R613, R642, and R647.

This sequence belongs to the GPSM family. Interacts with the dynein-dynactin complex; this interaction is inhibited in a PLK1-dependent manner. Part of a spindle orientation complex at least composed of GNAI1, GPSM2 and NUMA1. Interacts with LLGL2. Interacts (via TPR repeat region) with INSC/inscuteable. Interacts (via TPR repeat region) with NUMA1 (via C-terminus); this interaction is direct, inhibited in a PLK1-dependent manner, prevents the binding of NUMA1 with SPAG5 and promotes spindle pole organization. INSC and NUMA1 compete for the same binding site, but INSC has higher affinity and can displace NUMA1 (in vitro). Interacts with GNAI2. Interacts (via GoLoco domains) with the GDP-bound form of GNAI1 and GNAI3; has much lower affinity for the GTP-bound form. Interaction with GDP-bound GNAI3 strongly enhances the affinity for NUMA1. Interacts (via TPR repeat region) with FRMPD1. INSC and FRMPD1 compete for the same binding site, but INSC has higher affinity and can displace FRMPD1 (in vitro). Interacts (via TPR repeat region) with FRMPD4. Identified in a complex with INSC and F2RL2/Par3. Interacts with TASOR. As to expression, ubiquitously expressed.

Its subcellular location is the cytoplasm. It is found in the cell cortex. The protein resides in the cytoskeleton. It localises to the spindle pole. The protein localises to the lateral cell membrane. Functionally, plays an important role in mitotic spindle pole organization via its interaction with NUMA1. Required for cortical dynein-dynactin complex recruitment during metaphase. Plays a role in metaphase spindle orientation. Also plays an important role in asymmetric cell divisions. Has guanine nucleotide dissociation inhibitor (GDI) activity towards G(i) alpha proteins, such as GNAI1 and GNAI3, and thereby regulates their activity. This chain is G-protein-signaling modulator 2 (GPSM2), found in Homo sapiens (Human).